The sequence spans 303 residues: Acetylglutamate kinase (303 aa).

Substrate-binding positions include 76–77, Arg-98, and Asn-199; that span reads GG.

Belongs to the acetylglutamate kinase family. ArgB subfamily.

It localises to the cytoplasm. The catalysed reaction is N-acetyl-L-glutamate + ATP = N-acetyl-L-glutamyl 5-phosphate + ADP. It functions in the pathway amino-acid biosynthesis; L-arginine biosynthesis; N(2)-acetyl-L-ornithine from L-glutamate: step 2/4. Catalyzes the ATP-dependent phosphorylation of N-acetyl-L-glutamate. The sequence is that of Acetylglutamate kinase from Clavibacter michiganensis subsp. michiganensis (strain NCPPB 382).